The sequence spans 149 residues: D-aminoacyl-tRNA deacylase (149 aa).

The Gly-cisPro motif, important for rejection of L-amino acids motif lies at 137–138; it reads GP.

This sequence belongs to the DTD family. In terms of assembly, homodimer.

It localises to the cytoplasm. The enzyme catalyses glycyl-tRNA(Ala) + H2O = tRNA(Ala) + glycine + H(+). It carries out the reaction a D-aminoacyl-tRNA + H2O = a tRNA + a D-alpha-amino acid + H(+). An aminoacyl-tRNA editing enzyme that deacylates mischarged D-aminoacyl-tRNAs. Also deacylates mischarged glycyl-tRNA(Ala), protecting cells against glycine mischarging by AlaRS. Acts via tRNA-based rather than protein-based catalysis; rejects L-amino acids rather than detecting D-amino acids in the active site. By recycling D-aminoacyl-tRNA to D-amino acids and free tRNA molecules, this enzyme counteracts the toxicity associated with the formation of D-aminoacyl-tRNA entities in vivo and helps enforce protein L-homochirality. The chain is D-aminoacyl-tRNA deacylase from Syntrophotalea carbinolica (strain DSM 2380 / NBRC 103641 / GraBd1) (Pelobacter carbinolicus).